We begin with the raw amino-acid sequence, 265 residues long: Isoprenyl transferase 1 (265 aa).

The active site involves Asp-43. Asp-43 contacts Mg(2+). Substrate-binding positions include 44-47 (GNRR), Trp-48, His-61, and 89-91 (STE). Residue Asn-92 is the Proton acceptor of the active site. Residues Arg-95, Arg-214, and 220–222 (RLS) contribute to the substrate site. Residue Glu-233 participates in Mg(2+) binding.

This sequence belongs to the UPP synthase family. As to quaternary structure, homodimer. Requires Mg(2+) as cofactor.

Functionally, catalyzes the condensation of isopentenyl diphosphate (IPP) with allylic pyrophosphates generating different type of terpenoids. The chain is Isoprenyl transferase 1 from Corynebacterium diphtheriae (strain ATCC 700971 / NCTC 13129 / Biotype gravis).